Consider the following 414-residue polypeptide: Putative F-box/kelch-repeat protein At1g20940 (414 aa).

Residues 13–65 (SSIINDLPLDLLDEILFRLEPKSMAMMRCTNNSIKSYLSDPRFGPEYPSWVRP) form the F-box domain. 2 Kelch repeats span residues 281–328 (LTLI…MYDG) and 331–378 (LVVR…KLTP).

In terms of assembly, interacts with DEK3.

Its pathway is protein modification; protein ubiquitination. Its function is as follows. Probable component of an E3 ubiquitin ligase complex. The sequence is that of Putative F-box/kelch-repeat protein At1g20940 from Arabidopsis thaliana (Mouse-ear cress).